The following is a 311-amino-acid chain: Long form salivary protein D7L1 (311 aa).

A signal peptide spans 1 to 21; sequence MIVTGVLLFILLELFAQGSQA. 4 disulfides stabilise this stretch: Cys37–Cys73, Cys69–Cys128, Cys178–Cys211, and Cys252–Cys263.

Belongs to the PBP/GOBP family.

The protein resides in the secreted. Functionally, modulates blood feeding of female mosquitoes on vertebrate species by binding and sequestering different mediators involved in the host response. Binds leukotriene C4 and U-46619, a stable analog of thromboxane A2. Inhibits agonist-induced platelet aggregation. Exhibits vasodilating activity. The protein is Long form salivary protein D7L1 of Anopheles gambiae (African malaria mosquito).